Consider the following 95-residue polypeptide: uncharacterized protein (95 aa).

A coiled-coil region spans residues Lys-14–Ile-50.

This is an uncharacterized protein from Bacillus subtilis (strain 168).